Reading from the N-terminus, the 66-residue chain is uncharacterized protein (66 aa).

2 consecutive transmembrane segments (helical) span residues 3-23 and 34-54; these read LIHVLAALPFIGILLGIPFAN and FILAYIVMWALLTSALMAIVY.

Its subcellular location is the cell membrane. This is an uncharacterized protein from Bacillus subtilis (strain 168).